A 161-amino-acid polypeptide reads, in one-letter code: Spermidine N(1)-acetyltransferase (161 aa).

In terms of domain architecture, N-acetyltransferase spans 3–160 (IEIRKLSIED…SDFIMEKKYE (158 aa)). Acetyl-CoA contacts are provided by residues 92-94 (LYL), 99-104 (THKKIG), asparagine 131, and serine 136. The active-site Proton donor is the tyrosine 138. Lysine 140 contacts acetyl-CoA.

The protein belongs to the acetyltransferase family. As to quaternary structure, monomer or homodimer.

It carries out the reaction an alkane-alpha,omega-diamine + acetyl-CoA = an N-acetylalkane-alpha,omega-diamine + CoA + H(+). In terms of biological role, involved in the protection against polyamine toxicity by regulating their concentration. Could also be involved in the negative control of sporulation as well as production of degradative enzymes such as alpha-amylase, levansucrase and alkaline phosphatase. Catalyzes the transfer of an acetyl group from acetyl coenzyme A (AcCoA) to an acceptor substrate and release both CoA and the acetylated product. It can use a variety of substrates including spermidine, L-tryptophan, L-leucine, L-lysine, dopamine and tyramine. This chain is Spermidine N(1)-acetyltransferase, found in Thermoplasma acidophilum (strain ATCC 25905 / DSM 1728 / JCM 9062 / NBRC 15155 / AMRC-C165).